The sequence spans 81 residues: Defensin-like protein 45 (81 aa).

Positions 1 to 27 (MAITKTSATFVLLIILAASLSNFNVLA) are cleaved as a signal peptide. 4 disulfide bridges follow: Cys-40-Cys-79, Cys-44-Cys-67, Cys-53-Cys-77, and Cys-57-Cys-78.

Belongs to the DEFL family.

It localises to the secreted. This Arabidopsis thaliana (Mouse-ear cress) protein is Defensin-like protein 45.